Here is a 500-residue protein sequence, read N- to C-terminus: Glycerol kinase (500 aa).

T13 provides a ligand contact to ADP. Residues T13, T14, and S15 each coordinate ATP. Position 13 (T13) interacts with sn-glycerol 3-phosphate. R17 is a binding site for ADP. Sn-glycerol 3-phosphate contacts are provided by R83, E84, Y135, and D244. R83, E84, Y135, D244, and Q245 together coordinate glycerol. T266 and G309 together coordinate ADP. Residues T266, G309, Q313, and G410 each contribute to the ATP site. Residues G410 and N414 each contribute to the ADP site.

This sequence belongs to the FGGY kinase family.

It carries out the reaction glycerol + ATP = sn-glycerol 3-phosphate + ADP + H(+). It participates in polyol metabolism; glycerol degradation via glycerol kinase pathway; sn-glycerol 3-phosphate from glycerol: step 1/1. With respect to regulation, inhibited by fructose 1,6-bisphosphate (FBP). In terms of biological role, key enzyme in the regulation of glycerol uptake and metabolism. Catalyzes the phosphorylation of glycerol to yield sn-glycerol 3-phosphate. The protein is Glycerol kinase of Burkholderia vietnamiensis (strain G4 / LMG 22486) (Burkholderia cepacia (strain R1808)).